Consider the following 380-residue polypeptide: Fibromodulin (380 aa).

A signal peptide spans 1–18 (MRWANILLVAGLCRASLG). The 39-residue stretch at 71–109 (EAQQASSWQCPQECDCPPNFSSAMYCDTRNLRYLPFVPT) folds into the LRRNT domain. Asn-89 is a glycosylation site (N-linked (GlcNAc...) asparagine). LRR repeat units lie at residues 110–131 (RMKY…AFDN), 134–147 (ELEW…QISS), 160–180 (NLER…PLPR), 181–202 (SLRE…ALEG), 205–227 (NLTA…KGLK), 228–248 (SLIL…GLPM), 249–270 (ALEQ…YFKV), and 273–293 (KLLY…STNT). N-linked (GlcNAc...) (keratan sulfate) asparagine glycosylation is present at Asn-131. N-linked (GlcNAc...) (keratan sulfate) asparagine glycosylation occurs at Asn-170. Asn-205 is a glycosylation site (N-linked (GlcNAc...) (keratan sulfate) asparagine). Asn-295 carries an N-linked (GlcNAc...) (keratan sulfate) asparagine glycan. 2 LRR repeats span residues 298–317 (SILE…RVST) and 318–339 (NLEN…SFCT). The cysteines at positions 338 and 371 are disulfide-linked. Asn-345 carries an N-linked (GlcNAc...) asparagine glycan. An LRR 11 repeat occupies 348–371 (RLQVLRLDGNEIKRNAMPPDAPLC).

Belongs to the small leucine-rich proteoglycan (SLRP) family. SLRP class II subfamily. As to quaternary structure, binds to type I and type II collagen. In terms of processing, binds keratan sulfate chains.

The protein localises to the secreted. Its subcellular location is the extracellular space. It localises to the extracellular matrix. In terms of biological role, affects the rate of fibrils formation. May have a primary role in collagen fibrillogenesis. The chain is Fibromodulin (FMOD) from Gallus gallus (Chicken).